The following is a 2541-amino-acid chain: Talin-1 (2541 aa).

Residues 86–403 (RPLKIRMLDG…GYIDIILKKK (318 aa)) form the FERM domain. Thr167 carries the post-translational modification Phosphothreonine. Positions 280 to 435 (FQAHKNCGQM…PKKSTVLQQQ (156 aa)) are interaction with LAYN. Ser405, Ser425, Ser446, Ser620, and Ser729 each carry phosphoserine. The segment at 482 to 655 (RGHMPPLTSA…QASGELLQQI (174 aa)) is helical bundle R1. Residues 656–786 (GESDTDPHFQ…ALNELLQHVK (131 aa)) form a helical bundle R2 region. The tract at residues 787-911 (AHATGAGPAG…NAAAQNAIKK (125 aa)) is helical bundle R3. The tract at residues 913–1044 (LVQRLEHAAK…RTAAQKAQEA (132 aa)) is helical bundle R4. Phosphoserine is present on Ser1021. The helical bundle R5 stretch occupies residues 1046 to 1206 (GPLEMDSALS…NRCVSCLPGQ (161 aa)). Residue Tyr1116 is modified to Phosphotyrosine. Thr1142 bears the Phosphothreonine mark. Residues Ser1201 and Ser1225 each carry the phosphoserine modification. Residues 1207–1357 (RDVDNALRAV…QLITMCTQQA (151 aa)) are helical bundle R6. Position 1263 is a phosphothreonine (Thr1263). A phosphoserine mark is found at Ser1323 and Ser1328. The segment at 1327–1948 (ASPNLKSQLA…CSPSDVYTKK (622 aa)) is interaction with SYNM. The segment at 1358-1453 (PGQKECDNAL…AYLVGVSDPN (96 aa)) is helical bundle R7A; Interaction with KANK1. The segment at 1359–1659 (GQKECDNALR…SMRDKAPGQL (301 aa)) is interaction with VCL and F-actin. Residues 1461–1580 (LVEPTQFARA…NLSAFASNPE (120 aa)) form a helical bundle R8 region. At Lys1544 the chain carries N6-acetyllysine. Residues 1581–1653 (FSSVPAQISP…IKKLITSMRD (73 aa)) form a helical bundle R7B; Interaction with KANK1 region. The helical bundle R9 stretch occupies residues 1655 to 1822 (APGQLECETA…TLNEAASAAG (168 aa)). The segment at 1823-1973 (VVGGMVDSIT…VLAALQAGNR (151 aa)) is helical bundle R10. Position 1849 is a phosphoserine (Ser1849). Position 1855 is a phosphothreonine (Thr1855). Ser1878 is subject to Phosphoserine. The segment at 1974–2140 (GTQACITAAS…TVKAVEDEAT (167 aa)) is helical bundle R11. An N6-acetyllysine modification is found at Lys2031. Ser2040 carries the phosphoserine modification. Lys2115 is modified (N6-acetyllysine). The tract at residues 2141–2294 (KGTRALEATT…QAAEAMKGTE (154 aa)) is helical bundle R12. An I/LWEQ domain is found at 2293 to 2533 (TEWVDPEDPT…QIRQQQYKFL (241 aa)). The tract at residues 2300–2482 (DPTVIAENEL…AAQKAAAFED (183 aa)) is helical bundle R13.

As to quaternary structure, part of a complex composed of THSD1, PTK2/FAK1, TLN1 and VCL. Interacts with THSD1; this promotes interaction with PTK2/FAK1 and VCL. Interacts with NRAP and LAYN. Interacts with SYNM. Interacts with ITGB1; the interaction is prevented by competitive binding of ITGB1BP1. Binds with high affinity to VCL and with low affinity to integrins. Interacts with APBB1IP; this inhibits VCL binding. Interacts with PTK2/FAK1. Interacts with PIP5K1C. Interacts with F-actin. Interacts with SVEP1. Interacts (via R7 domain) with KANK1 or KANK2 (via KN motif); this interaction likely initiates the assembly of cortical microtubule stabilization complexes (CMSCs) at the vicinity of focal adhesions.

It localises to the cell projection. The protein localises to the ruffle membrane. Its subcellular location is the cytoplasm. The protein resides in the cytoskeleton. It is found in the cell surface. It localises to the cell junction. The protein localises to the focal adhesion. Its function is as follows. High molecular weight cytoskeletal protein concentrated at regions of cell-matrix and cell-cell contacts. Involved in connections of major cytoskeletal structures to the plasma membrane. With KANK1 co-organize the assembly of cortical microtubule stabilizing complexes (CMSCs) positioned to control microtubule-actin crosstalk at focal adhesions (FAs) rims. In Mus musculus (Mouse), this protein is Talin-1 (Tln1).